Consider the following 864-residue polypeptide: Translation initiation factor IF-2 (864 aa).

Positions 1–252 (MEDKNKTIKE…KTSSDKRDFS (252 aa)) are disordered. Positions 78-90 (KEVKYEESSRKQD) are enriched in basic and acidic residues. The segment covering 106 to 120 (VRPSGDSSYPVSRSP) has biased composition (polar residues). Over residues 150–212 (RGPGQGGGYQ…PGNRSGGPGG (63 aa)) the composition is skewed to gly residues. The segment covering 239-252 (HDKEKTSSDKRDFS) has biased composition (basic and acidic residues). The 170-residue stretch at 359–528 (NRPPVVTIMG…LLQAEVMDLK (170 aa)) folds into the tr-type G domain. Residues 368–375 (GHVDHGKT) are G1. 368–375 (GHVDHGKT) lines the GTP pocket. Positions 393–397 (GITQH) are G2. The G3 stretch occupies residues 414 to 417 (DTPG). GTP contacts are provided by residues 414 to 418 (DTPGH) and 468 to 471 (NKID). The segment at 468–471 (NKID) is G4. The tract at residues 504–506 (SAR) is G5.

It belongs to the TRAFAC class translation factor GTPase superfamily. Classic translation factor GTPase family. IF-2 subfamily.

The protein resides in the cytoplasm. In terms of biological role, one of the essential components for the initiation of protein synthesis. Protects formylmethionyl-tRNA from spontaneous hydrolysis and promotes its binding to the 30S ribosomal subunits. Also involved in the hydrolysis of GTP during the formation of the 70S ribosomal complex. The chain is Translation initiation factor IF-2 from Leptospira borgpetersenii serovar Hardjo-bovis (strain L550).